A 109-amino-acid chain; its full sequence is uncharacterized protein (109 aa).

Residues Asn36–Lys109 are disordered. Residues Asn39–Asn88 are compositionally biased toward low complexity. Positions Gln99–Lys109 are enriched in basic residues.

This is an uncharacterized protein from Dictyostelium discoideum (Social amoeba).